The sequence spans 370 residues: MLEFNNSTPLTMGVELELQIVNRRDYNLTRGSSDLLVIIDKTDHGYDIKPEITESMIEIATSVHTDHKEMLAELTAMRTLLISAADKLNLGLAGGGAHPFQHWEDQRIYPTDRYRLVSELYGYLAKQFTVYGQHIHIGCATGDEAIRLAHMLARYIPHFITMSASSPFYQGVDTTFQSSRLTSINAFPLSGYMPFVTDWDSFNAYFDKMSSLGIVASMKDFYWDIRPKPEYGTVEIRVCDTPLSIEVAVALAGYAQTLSKFFFAQQELKPAQDTYLTYSYNRFQACRFGLNGALINPINGTQTSIKEDILQTFEMLADIAQELGTTEAIELLRQRIQAGQSDADWLRASYEKSGSLSDVVRQQSAVWMAR.

This sequence belongs to the glutamate--cysteine ligase type 2 family. YbdK subfamily.

It catalyses the reaction L-cysteine + L-glutamate + ATP = gamma-L-glutamyl-L-cysteine + ADP + phosphate + H(+). ATP-dependent carboxylate-amine ligase which exhibits weak glutamate--cysteine ligase activity. The polypeptide is Putative glutamate--cysteine ligase 2 (Janthinobacterium sp. (strain Marseille) (Minibacterium massiliensis)).